A 175-amino-acid polypeptide reads, in one-letter code: ADP-ribosylation factor 6 (175 aa).

A lipid anchor (N-myristoyl glycine) is attached at Gly2. The N6-myristoyl lysine moiety is linked to residue Lys3. GTP is bound by residues 23–28, 41–44, 63–67, 122–125, and 155–156; these read AAGKTT, TIPT, DVGGQ, NKQD, and CA.

Belongs to the small GTPase superfamily. Arf family.

Its subcellular location is the cytoplasm. It localises to the cytosol. The protein localises to the cell membrane. It is found in the endosome membrane. The protein resides in the recycling endosome membrane. Its subcellular location is the cell projection. It localises to the filopodium membrane. The protein localises to the ruffle. It is found in the cleavage furrow. The protein resides in the midbody. Its subcellular location is the midbody ring. It localises to the golgi apparatus. It carries out the reaction GTP + H2O = GDP + phosphate + H(+). Functionally, GTP-binding protein involved in protein trafficking; regulates endocytic recycling and cytoskeleton remodeling. May modulate vesicle budding and uncoating within the Golgi apparatus. May contribute to the regulation of dendritic branching, filopodia extension and dendritic spine development. This Xenopus laevis (African clawed frog) protein is ADP-ribosylation factor 6 (arf6).